We begin with the raw amino-acid sequence, 106 residues long: Iron-sulfur cluster assembly protein CyaY (106 aa).

The protein belongs to the frataxin family.

Involved in iron-sulfur (Fe-S) cluster assembly. May act as a regulator of Fe-S biogenesis. This is Iron-sulfur cluster assembly protein CyaY from Salmonella typhimurium (strain LT2 / SGSC1412 / ATCC 700720).